The chain runs to 306 residues: UDP-N-acetylenolpyruvoylglucosamine reductase (306 aa).

Residues V34–S198 enclose the FAD-binding PCMH-type domain. Residue R177 is part of the active site. S227 (proton donor) is an active-site residue. E297 is a catalytic residue.

This sequence belongs to the MurB family. It depends on FAD as a cofactor.

Its subcellular location is the cytoplasm. The catalysed reaction is UDP-N-acetyl-alpha-D-muramate + NADP(+) = UDP-N-acetyl-3-O-(1-carboxyvinyl)-alpha-D-glucosamine + NADPH + H(+). It participates in cell wall biogenesis; peptidoglycan biosynthesis. In terms of biological role, cell wall formation. This Clostridium botulinum (strain Okra / Type B1) protein is UDP-N-acetylenolpyruvoylglucosamine reductase.